A 523-amino-acid polypeptide reads, in one-letter code: REST corepressor 2 (523 aa).

The disordered stretch occupies residues 1–43; sequence MPSVMEKPSAGSGILSRSRAKTAPNGGQPHSEDDSSEEEHSHD. Basic and acidic residues predominate over residues 30–43; that stretch reads HSEDDSSEEEHSHD. A phosphoserine mark is found at Ser31, Ser35, Ser36, and Ser63. Residues 44-129 form the ELM2 domain; the sequence is SMIRVGTNYQ…KSLADLANFT (86 aa). A Glycyl lysine isopeptide (Lys-Gly) (interchain with G-Cter in SUMO2) cross-link involves residue Lys88. Residues 130 to 181 enclose the SANT 1 domain; that stretch reads PFPDEWTVEDKVLFEQAFGFHGKCFQRIQQMLPDKLIPSLVKYYYSWKKTRS. The disordered stretch occupies residues 185 to 265; the sequence is VMDRQARRLG…RRRPPKGMYL (81 aa). Ser202 is modified (phosphoserine). Basic residues predominate over residues 248–260; that stretch reads YRHHPLRTRRRPP. The stretch at 283 to 314 forms a coiled coil; it reads TLRGLDSQLISLKRQVQSMKQTNSSLRQALEG. The region spanning 327–378 is the SANT 2 domain; sequence KFNSRWTTDEQLLAVQAIRRYGKDFGAIAEVIGNKTLTQVKTFFVSYRRRFN. The interval 387–523 is disordered; sequence EAEQDGAPTA…AQLEPPAPSL (137 aa). Over residues 432 to 459 the composition is skewed to pro residues; it reads SVPPAPPPPPPPTSLSQPPPLLRPPLPT. A compositionally biased stretch (low complexity) spans 460 to 482; that stretch reads APTLLRQPPPLQQGRFLQPRLAP. Residue Arg479 is modified to Asymmetric dimethylarginine.

This sequence belongs to the CoREST family.

It is found in the nucleus. Its function is as follows. May act as a component of a corepressor complex that represses transcription. In Rattus norvegicus (Rat), this protein is REST corepressor 2 (Rcor2).